The primary structure comprises 440 residues: Probable exopolygalacturonase C (440 aa).

An N-terminal signal peptide occupies residues 1–19 (MSVFKASFLFLLSSSLVHG). Residues Asn-82 and Asn-99 are each glycosylated (N-linked (GlcNAc...) asparagine). PbH1 repeat units follow at residues 215-236 (GTNIQITDSIMYNGDDAIAVGA), 238-259 (SHDTLFTRNTIGYQTHGMSIGS), and 265-288 (TDFANISNIRFDDVTVVDGLYAAR). Asp-229 (proton donor) is an active-site residue. Residue His-253 is part of the active site. 4 N-linked (GlcNAc...) asparagine glycosylation sites follow: Asn-269, Asn-301, Asn-311, and Asn-334. A disulfide bond links Cys-387 and Cys-393. N-linked (GlcNAc...) asparagine glycosylation is found at Asn-417 and Asn-432.

Belongs to the glycosyl hydrolase 28 family.

It localises to the secreted. The catalysed reaction is [(1-&gt;4)-alpha-D-galacturonosyl](n) + H2O = alpha-D-galacturonate + [(1-&gt;4)-alpha-D-galacturonosyl](n-1). In terms of biological role, specific in hydrolyzing the terminal glycosidic bond of polygalacturonic acid and oligogalacturonates. The polypeptide is Probable exopolygalacturonase C (pgxC) (Aspergillus niger (strain ATCC MYA-4892 / CBS 513.88 / FGSC A1513)).